We begin with the raw amino-acid sequence, 718 residues long: Adhesin-like cell surface protein MAD1 (718 aa).

Residues Met-1–Ala-19 form the signal peptide. Tandem repeats lie at residues Pro-217–Ala-243, Pro-244–Ala-265, Pro-266–Ala-282, Pro-283–Ala-309, Pro-310–Ala-336, Pro-337–Ala-358, Pro-359–Ala-382, Pro-383–Ala-402, and Pro-403–Thr-420. A disordered region spans residues Thr-452–Thr-472. The 114-residue stretch at Ser-462–Ala-575 folds into the CFEM domain. 3 disulfide bridges follow: Cys-494/Cys-526, Cys-504/Cys-512, and Cys-514/Cys-548. Asp-509 serves as a coordination point for heme. Residue Gly-693 is the site of GPI-anchor amidated glycine attachment. A propeptide spans Ala-694–Ala-718 (removed in mature form).

The protein belongs to the RBT5 family. In terms of processing, the GPI-anchor is attached to the protein in the endoplasmic reticulum and serves to target the protein to the cell surface. There, the glucosamine-inositol phospholipid moiety is cleaved off and the GPI-modified mannoprotein is covalently attached via its lipidless GPI glycan remnant to the 1,6-beta-glucan of the outer cell wall layer.

The protein resides in the secreted. It localises to the cell wall. The protein localises to the cell membrane. In terms of biological role, cell surface adhesion protein that plays a key role in switching between the saprophytic lifestyle and the predacious lifestyle (nematode trapping). Likely functions to prevent energy-consuming trap formation in the absence of nematodes, and keeps the fungus in the saprophytic life style. May influence the induction signal of trap formation by limiting the porosity of the cell wall and thus affecting its permeability of nitrogen source. The protein is Adhesin-like cell surface protein MAD1 of Arthrobotrys oligospora (strain ATCC 24927 / CBS 115.81 / DSM 1491) (Nematode-trapping fungus).